Consider the following 513-residue polypeptide: ATP synthase subunit alpha (513 aa).

169–176 lines the ATP pocket; the sequence is GDRQTGKT.

This sequence belongs to the ATPase alpha/beta chains family. In terms of assembly, F-type ATPases have 2 components, CF(1) - the catalytic core - and CF(0) - the membrane proton channel. CF(1) has five subunits: alpha(3), beta(3), gamma(1), delta(1), epsilon(1). CF(0) has three main subunits: a(1), b(2) and c(9-12). The alpha and beta chains form an alternating ring which encloses part of the gamma chain. CF(1) is attached to CF(0) by a central stalk formed by the gamma and epsilon chains, while a peripheral stalk is formed by the delta and b chains.

The protein resides in the cell inner membrane. The enzyme catalyses ATP + H2O + 4 H(+)(in) = ADP + phosphate + 5 H(+)(out). Produces ATP from ADP in the presence of a proton gradient across the membrane. The alpha chain is a regulatory subunit. The chain is ATP synthase subunit alpha from Yersinia pseudotuberculosis serotype O:1b (strain IP 31758).